Reading from the N-terminus, the 239-residue chain is Ribosomal RNA small subunit methyltransferase G (239 aa).

S-adenosyl-L-methionine-binding positions include glycine 78, phenylalanine 83, 129-130, and arginine 148; that span reads AE.

Belongs to the methyltransferase superfamily. RNA methyltransferase RsmG family.

The protein localises to the cytoplasm. In terms of biological role, specifically methylates the N7 position of a guanine in 16S rRNA. The chain is Ribosomal RNA small subunit methyltransferase G from Clostridium botulinum (strain Kyoto / Type A2).